Here is a 443-residue protein sequence, read N- to C-terminus: Zinc finger CCCH domain-containing protein 63 (443 aa).

Disordered regions lie at residues 1 to 29 and 56 to 99; these read MDFD…MAPT and LPGP…SSSW. 2 consecutive C3H1-type zinc fingers follow at residues 30–56 and 109–136; these read DTRQ…HREL and TKTE…HCWS. WD repeat units lie at residues 149–190, 228–265, 272–311, 313–349, 354–396, and 404–442; these read GHEK…GVLK, GPVG…NCFE, GHTL…QTLT, HSSV…NLEV, KEEH…LFIR, and FAKQ…TAAL.

In Arabidopsis thaliana (Mouse-ear cress), this protein is Zinc finger CCCH domain-containing protein 63 (ZFWD2).